We begin with the raw amino-acid sequence, 324 residues long: Hairy/enhancer-of-split related with YRPW motif protein 2 (324 aa).

Residues 1-34 (MKRPCEDSTSDSDMDETIDVGSENNYSGQSNGSF) form a disordered region. Acidic residues predominate over residues 8–18 (STSDSDMDETI). Positions 22 to 34 (SENNYSGQSNGSF) are enriched in polar residues. Residues 48–103 (ARKKRRGIIEKRRRDRINNSLSELRRLVPTAFEKQGSAKLEKAEILQMTVDHLKML) enclose the bHLH domain. The Orange domain occupies 122–157 (LSIGFRECLTEVARYLSSVEGLDSSDPLRVRLVSHL). Residues 294-311 (SSSVSTSTTSQQSSGSSS) are compositionally biased toward low complexity. Residues 294-324 (SSSVSTSTTSQQSSGSSSKPYRPWGTEVGAF) are disordered. Positions 314–317 (YRPW) match the YRPW motif motif.

Belongs to the HEY family.

It is found in the nucleus. In terms of biological role, transcriptional repressor. Downstream effector of Notch signaling which regulates cell fate choice in angioblasts. Represses the venous cell fate, thereby promoting the arterial cell fate and aorta formation. The protein is Hairy/enhancer-of-split related with YRPW motif protein 2 (hey2) of Danio rerio (Zebrafish).